We begin with the raw amino-acid sequence, 93 residues long: Cobalt transport protein CbiN (93 aa).

The next 2 membrane-spanning stretches (helical) occupy residues 5–25 (LMLL…NHGG) and 63–83 (LLFT…LGYC).

It belongs to the CbiN family. Forms an energy-coupling factor (ECF) transporter complex composed of an ATP-binding protein (A component, CbiO), a transmembrane protein (T component, CbiQ) and 2 possible substrate-capture proteins (S components, CbiM and CbiN) of unknown stoichimetry.

The protein localises to the cell inner membrane. It participates in cofactor biosynthesis; adenosylcobalamin biosynthesis. Part of the energy-coupling factor (ECF) transporter complex CbiMNOQ involved in cobalt import. In Salmonella gallinarum (strain 287/91 / NCTC 13346), this protein is Cobalt transport protein CbiN.